The chain runs to 604 residues: Replication protein A 70 kDa DNA-binding subunit B (604 aa).

Positions 170–256 form a DNA-binding region, OB; it reads WTIKVRVTNK…QNDYEMTLNE (87 aa). A C4-type zinc finger spans residues 468–488; sequence CKTCNKKVTEAMDSGYWCESC.

It belongs to the replication factor A protein 1 family. Heterotrimer of RPA1, RPA2 and RPA3 (canonical replication protein A complex).

The protein resides in the nucleus. Functionally, component of the replication protein A complex (RPA) required for DNA recombination, repair and replication. The activity of RPA is mediated by single-stranded DNA binding and protein interactions. Probably involved in repair of double-strand DNA breaks (DSBs) induced by genotoxic stresses. This chain is Replication protein A 70 kDa DNA-binding subunit B (RPA1B), found in Arabidopsis thaliana (Mouse-ear cress).